Here is a 381-residue protein sequence, read N- to C-terminus: Homoserine O-succinyltransferase (381 aa).

Positions 45–360 constitute an AB hydrolase-1 domain; sequence NAVLVCHALN…PHGHDAFLLD (316 aa). S151 serves as the catalytic Nucleophile. R221 contacts substrate. Active-site residues include D321 and H354. D355 lines the substrate pocket.

The protein belongs to the AB hydrolase superfamily. MetX family. As to quaternary structure, homodimer.

It is found in the cytoplasm. The catalysed reaction is L-homoserine + succinyl-CoA = O-succinyl-L-homoserine + CoA. Its pathway is amino-acid biosynthesis; L-methionine biosynthesis via de novo pathway; O-succinyl-L-homoserine from L-homoserine: step 1/1. Its function is as follows. Transfers a succinyl group from succinyl-CoA to L-homoserine, forming succinyl-L-homoserine. This is Homoserine O-succinyltransferase from Paraburkholderia xenovorans (strain LB400).